A 312-amino-acid polypeptide reads, in one-letter code: MFENVISIKDFKREDIEFILREAEKMEPFASGEKSSSALRGKILGMMFYEPSTRTRLSFETAMKRLGGDVVGFADTGATSAVKGESLADTAMMLSAYSDAIVIRHNLEGAARYISDVVDVPVINAGDGAGQHPTQTLLDLYTMKRFFGRIGSLRVALVGDLKYGRTVHSLAYALAVFGASMSFVSPPVLRMPDNIIHDLRRAGVEVKETERLDDVIDEVDVLYVTRIQKERFPDPEEYSRIRGAYHIDGSTVADRDLIVMHPLPRIDEISPEVDSLPQAMYFRQAFYGVPVRMALLRLLISERRGSENQKIV.

The carbamoyl phosphate site is built by R54 and T55. L-aspartate is bound at residue K83. The carbamoyl phosphate site is built by R104, H132, and Q135. L-aspartate contacts are provided by R165 and R226. 2 residues coordinate carbamoyl phosphate: L263 and P264.

The protein belongs to the aspartate/ornithine carbamoyltransferase superfamily. ATCase family. As to quaternary structure, heterooligomer of catalytic and regulatory chains.

It carries out the reaction carbamoyl phosphate + L-aspartate = N-carbamoyl-L-aspartate + phosphate + H(+). It participates in pyrimidine metabolism; UMP biosynthesis via de novo pathway; (S)-dihydroorotate from bicarbonate: step 2/3. Catalyzes the condensation of carbamoyl phosphate and aspartate to form carbamoyl aspartate and inorganic phosphate, the committed step in the de novo pyrimidine nucleotide biosynthesis pathway. The chain is Aspartate carbamoyltransferase catalytic subunit from Methanothermobacter thermautotrophicus (strain ATCC 29096 / DSM 1053 / JCM 10044 / NBRC 100330 / Delta H) (Methanobacterium thermoautotrophicum).